Here is a 732-residue protein sequence, read N- to C-terminus: Catalase-peroxidase (732 aa).

A cross-link (tryptophyl-tyrosyl-methioninium (Trp-Tyr) (with M-246)) is located at residues 97–220 (WHSAGTYRTG…LAAVQMGLIY (124 aa)). Histidine 98 (proton acceptor) is an active-site residue. The segment at residues 220–246 (YVNPEGPDGKPDPVAAGKDIRETFGRM) is a cross-link (tryptophyl-tyrosyl-methioninium (Tyr-Met) (with W-97)). Histidine 261 provides a ligand contact to heme b.

It belongs to the peroxidase family. Peroxidase/catalase subfamily. As to quaternary structure, homodimer or homotetramer. The cofactor is heme b. Post-translationally, formation of the three residue Trp-Tyr-Met cross-link is important for the catalase, but not the peroxidase activity of the enzyme.

The enzyme catalyses H2O2 + AH2 = A + 2 H2O. It carries out the reaction 2 H2O2 = O2 + 2 H2O. Bifunctional enzyme with both catalase and broad-spectrum peroxidase activity. This is Catalase-peroxidase from Chlorobium phaeobacteroides (strain BS1).